We begin with the raw amino-acid sequence, 282 residues long: MSQKKSPRFELRSGNVDALLLALNTADLDAVRDDLLSRFESTPDFFSDDVVALDLRRLEGTGALALDRVIDTLATLKARAIGVVARADQRDWAGGFGLPLLDSQSRRGGKDEAPKEKAGKPEATAASGQTDAEAAGNTGKGKDSEGAAVNGKASEIAEIMAAANAASAPRAIPTLLIDKPLRSGQQIYAQGDVVILDLVSYGAEVIAEGNIHIYAPLRGRALAGVKGNPDARIFCTCLEPELISIAGIYRTAEQTLPADVLGKSAQVRLADEKLILEPLRMK.

The interval 103–147 is disordered; that stretch reads SQSRRGGKDEAPKEKAGKPEATAASGQTDAEAAGNTGKGKDSEGA. Basic and acidic residues predominate over residues 104–120; sequence QSRRGGKDEAPKEKAGK.

It belongs to the MinC family. As to quaternary structure, interacts with MinD and FtsZ.

Functionally, cell division inhibitor that blocks the formation of polar Z ring septums. Rapidly oscillates between the poles of the cell to destabilize FtsZ filaments that have formed before they mature into polar Z rings. Prevents FtsZ polymerization. The protein is Probable septum site-determining protein MinC of Cupriavidus metallidurans (strain ATCC 43123 / DSM 2839 / NBRC 102507 / CH34) (Ralstonia metallidurans).